A 323-amino-acid polypeptide reads, in one-letter code: tRNA uridine(34) hydroxylase (323 aa).

The Rhodanese domain occupies 123–217; the sequence is SDPDVVVIDT…YLETIPEEES (95 aa). Residue Cys177 is the Cysteine persulfide intermediate of the active site.

The protein belongs to the TrhO family.

It carries out the reaction uridine(34) in tRNA + AH2 + O2 = 5-hydroxyuridine(34) in tRNA + A + H2O. Catalyzes oxygen-dependent 5-hydroxyuridine (ho5U) modification at position 34 in tRNAs. The polypeptide is tRNA uridine(34) hydroxylase (Methylobacillus flagellatus (strain ATCC 51484 / DSM 6875 / VKM B-1610 / KT)).